Consider the following 283-residue polypeptide: Acetyl-coenzyme A carboxylase carboxyl transferase subunit beta (283 aa).

In terms of domain architecture, CoA carboxyltransferase N-terminal spans 29–283 (LWVACPKCQQ…LKLHERGAHY (255 aa)). Cys-33, Cys-36, Cys-51, and Cys-54 together coordinate Zn(2+). The C4-type zinc-finger motif lies at 33 to 54 (CPKCQQSIYHKDLGYYRTCPVC).

The protein belongs to the AccD/PCCB family. Acetyl-CoA carboxylase is a heterohexamer composed of biotin carboxyl carrier protein (AccB), biotin carboxylase (AccC) and two subunits each of ACCase subunit alpha (AccA) and ACCase subunit beta (AccD). Zn(2+) is required as a cofactor.

It is found in the cytoplasm. It carries out the reaction N(6)-carboxybiotinyl-L-lysyl-[protein] + acetyl-CoA = N(6)-biotinyl-L-lysyl-[protein] + malonyl-CoA. It participates in lipid metabolism; malonyl-CoA biosynthesis; malonyl-CoA from acetyl-CoA: step 1/1. Its function is as follows. Component of the acetyl coenzyme A carboxylase (ACC) complex. Biotin carboxylase (BC) catalyzes the carboxylation of biotin on its carrier protein (BCCP) and then the CO(2) group is transferred by the transcarboxylase to acetyl-CoA to form malonyl-CoA. This is Acetyl-coenzyme A carboxylase carboxyl transferase subunit beta from Latilactobacillus sakei subsp. sakei (strain 23K) (Lactobacillus sakei subsp. sakei).